We begin with the raw amino-acid sequence, 213 residues long: Thymidylate kinase (213 aa).

ATP is bound at residue 10-17; it reads GLEGAGKT.

It belongs to the thymidylate kinase family.

It catalyses the reaction dTMP + ATP = dTDP + ADP. Functionally, phosphorylation of dTMP to form dTDP in both de novo and salvage pathways of dTTP synthesis. This Enterobacter sp. (strain 638) protein is Thymidylate kinase.